The following is a 466-amino-acid chain: tRNA-2-methylthio-N(6)-dimethylallyladenosine synthase (466 aa).

One can recognise an MTTase N-terminal domain in the interval 5–125 (RKLHIKSYGC…LPELLARAGR (121 aa)). [4Fe-4S] cluster is bound by residues cysteine 14, cysteine 50, cysteine 88, cysteine 166, cysteine 170, and cysteine 173. A Radical SAM core domain is found at 152-384 (RARGVSAFVT…QSLIDSQQAA (233 aa)). Residues 387-449 (KAAIGTVVDV…RYSLLGELVA (63 aa)) enclose the TRAM domain.

Belongs to the methylthiotransferase family. MiaB subfamily. In terms of assembly, monomer. It depends on [4Fe-4S] cluster as a cofactor.

The protein localises to the cytoplasm. The catalysed reaction is N(6)-dimethylallyladenosine(37) in tRNA + (sulfur carrier)-SH + AH2 + 2 S-adenosyl-L-methionine = 2-methylsulfanyl-N(6)-dimethylallyladenosine(37) in tRNA + (sulfur carrier)-H + 5'-deoxyadenosine + L-methionine + A + S-adenosyl-L-homocysteine + 2 H(+). In terms of biological role, catalyzes the methylthiolation of N6-(dimethylallyl)adenosine (i(6)A), leading to the formation of 2-methylthio-N6-(dimethylallyl)adenosine (ms(2)i(6)A) at position 37 in tRNAs that read codons beginning with uridine. This chain is tRNA-2-methylthio-N(6)-dimethylallyladenosine synthase, found in Bradyrhizobium sp. (strain BTAi1 / ATCC BAA-1182).